The following is a 567-amino-acid chain: Probable diguanylate cyclase DgcQ (567 aa).

The next 2 helical transmembrane spans lie at 20–40 (FGPG…STLL) and 357–377 (IALT…WGVI). The GGDEF domain maps to 425-560 (QPFSVIQLDL…GRNRICASDA (136 aa)). Position 433 (aspartate 433) interacts with Mg(2+). Asparagine 441, histidine 446, and aspartate 450 together coordinate substrate. Glutamate 476 is a binding site for Mg(2+). Glutamate 476 serves as the catalytic Proton acceptor.

Homodimer. The cofactor is Mg(2+).

It is found in the cell inner membrane. The enzyme catalyses 2 GTP = 3',3'-c-di-GMP + 2 diphosphate. Its pathway is glycan metabolism; bacterial cellulose biosynthesis. The protein operates within purine metabolism; 3',5'-cyclic di-GMP biosynthesis. Catalyzes the synthesis of cyclic-di-GMP (c-di-GMP) via the condensation of 2 GTP molecules. Cyclic-di-GMP is a second messenger which controls cell surface-associated traits in bacteria. Involved in the regulation of cellulose production. The polypeptide is Probable diguanylate cyclase DgcQ (Salmonella typhi).